The chain runs to 184 residues: Bifunctional protein PyrR (184 aa).

Residues I99 to T111 carry the PRPP-binding motif.

The protein belongs to the purine/pyrimidine phosphoribosyltransferase family. PyrR subfamily. As to quaternary structure, homodimer and homohexamer; in equilibrium.

It carries out the reaction UMP + diphosphate = 5-phospho-alpha-D-ribose 1-diphosphate + uracil. Its function is as follows. Regulates transcriptional attenuation of the pyrimidine nucleotide (pyr) operon by binding in a uridine-dependent manner to specific sites on pyr mRNA. This disrupts an antiterminator hairpin in the RNA and favors formation of a downstream transcription terminator, leading to a reduced expression of downstream genes. In terms of biological role, also displays a weak uracil phosphoribosyltransferase activity which is not physiologically significant. The polypeptide is Bifunctional protein PyrR (Acetivibrio thermocellus (strain ATCC 27405 / DSM 1237 / JCM 9322 / NBRC 103400 / NCIMB 10682 / NRRL B-4536 / VPI 7372) (Clostridium thermocellum)).